The primary structure comprises 326 residues: 4-hydroxythreonine-4-phosphate dehydrogenase (326 aa).

Residues H133 and T134 each coordinate substrate. Residues H163, H208, and H263 each contribute to the a divalent metal cation site. K271, N280, and R289 together coordinate substrate.

It belongs to the PdxA family. As to quaternary structure, homodimer. The cofactor is Zn(2+). Mg(2+) serves as cofactor. Co(2+) is required as a cofactor.

The protein resides in the cytoplasm. It carries out the reaction 4-(phosphooxy)-L-threonine + NAD(+) = 3-amino-2-oxopropyl phosphate + CO2 + NADH. It functions in the pathway cofactor biosynthesis; pyridoxine 5'-phosphate biosynthesis; pyridoxine 5'-phosphate from D-erythrose 4-phosphate: step 4/5. Functionally, catalyzes the NAD(P)-dependent oxidation of 4-(phosphooxy)-L-threonine (HTP) into 2-amino-3-oxo-4-(phosphooxy)butyric acid which spontaneously decarboxylates to form 3-amino-2-oxopropyl phosphate (AHAP). The sequence is that of 4-hydroxythreonine-4-phosphate dehydrogenase from Pseudoalteromonas atlantica (strain T6c / ATCC BAA-1087).